We begin with the raw amino-acid sequence, 101 residues long: Small ribosomal subunit protein uS14 (101 aa).

The interval 48–69 (LSKLPRDSSPSRHRSRCELSGR) is disordered. The span at 51-68 (LPRDSSPSRHRSRCELSG) shows a compositional bias: basic and acidic residues.

This sequence belongs to the universal ribosomal protein uS14 family. In terms of assembly, part of the 30S ribosomal subunit. Contacts proteins S3 and S10.

In terms of biological role, binds 16S rRNA, required for the assembly of 30S particles and may also be responsible for determining the conformation of the 16S rRNA at the A site. The polypeptide is Small ribosomal subunit protein uS14 (Stenotrophomonas maltophilia (strain R551-3)).